A 466-amino-acid chain; its full sequence is Metaxin-1 (466 aa).

Over residues 1 to 19 (MLLGGPPRSPRSGTSPKGP) the composition is skewed to low complexity. The tract at residues 1–133 (MLLGGPPRSP…AVAGGGPRQG (133 aa)) is disordered. Residues 20-36 (WSSTGHVQFGKSPQTWP) show a composition bias toward polar residues. The span at 90-110 (ARGPVPRSSAASRARRSLASP) shows a compositional bias: low complexity. Glycyl lysine isopeptide (Lys-Gly) (interchain with G-Cter in ubiquitin) cross-links involve residues Lys-187, Lys-190, Lys-227, and Lys-317. Residues 421–441 (ILSVLAGLAAMVGYALLSGIV) traverse the membrane as a helical segment.

Belongs to the metaxin family. Interacts with MTX2/metaxin-2. Associates with the mitochondrial contact site and cristae organizing system (MICOS) complex, composed of at least MICOS10/MIC10, CHCHD3/MIC19, CHCHD6/MIC25, APOOL/MIC27, IMMT/MIC60, APOO/MIC23/MIC26 and QIL1/MIC13. This complex was also known under the names MINOS or MitOS complex. The MICOS complex associates with mitochondrial outer membrane proteins SAMM50, MTX1 and MTX2 (together described as components of the mitochondrial outer membrane sorting assembly machinery (SAM) complex) and DNAJC11, mitochondrial inner membrane protein TMEM11 and with HSPA9. The MICOS and SAM complexes together with DNAJC11 are part of a large protein complex spanning both membranes termed the mitochondrial intermembrane space bridging (MIB) complex. Interacts with ARMC1. In terms of processing, ubiquitinated by PRKN during mitophagy, leading to its degradation and enhancement of mitophagy. Deubiquitinated by USP30.

It is found in the membrane. Its subcellular location is the mitochondrion outer membrane. In terms of biological role, involved in transport of proteins into the mitochondrion. Essential for embryonic development. The chain is Metaxin-1 (MTX1) from Homo sapiens (Human).